The sequence spans 209 residues: Large ribosomal subunit protein uL3 (209 aa).

Gln-150 is modified (N5-methylglutamine).

This sequence belongs to the universal ribosomal protein uL3 family. As to quaternary structure, part of the 50S ribosomal subunit. Forms a cluster with proteins L14 and L19. In terms of processing, methylated by PrmB.

One of the primary rRNA binding proteins, it binds directly near the 3'-end of the 23S rRNA, where it nucleates assembly of the 50S subunit. This is Large ribosomal subunit protein uL3 from Proteus mirabilis (strain HI4320).